The following is a 64-amino-acid chain: Peptide Ctri9677 (64 aa).

Positions 1–22 are cleaved as a signal peptide; sequence MKNNTILFTFLIVFLIASQIEA. Position 36 is a leucine amide (Leu-36). A propeptide spanning residues 40-64 is cleaved from the precursor; the sequence is SEDREFFDFFTDDNLAALEKALKEY.

This sequence belongs to the non-disulfide-bridged peptide (NDBP) superfamily. Short antimicrobial peptide (group 4) family. In terms of tissue distribution, expressed by the venom gland.

It localises to the secreted. Antimicrobial peptide. The sequence is that of Peptide Ctri9677 from Chaerilus tricostatus (Scorpion).